The chain runs to 447 residues: N-succinylarginine dihydrolase (447 aa).

Residues 19–28 (AGLSFGNEAS), N110, and 137–138 (HR) contribute to the substrate site. E174 is an active-site residue. R212 contacts substrate. Residue H248 is part of the active site. Residues D250 and N359 each coordinate substrate. The active-site Nucleophile is the C365.

The protein belongs to the succinylarginine dihydrolase family. In terms of assembly, homodimer.

The catalysed reaction is N(2)-succinyl-L-arginine + 2 H2O + 2 H(+) = N(2)-succinyl-L-ornithine + 2 NH4(+) + CO2. The protein operates within amino-acid degradation; L-arginine degradation via AST pathway; L-glutamate and succinate from L-arginine: step 2/5. In terms of biological role, catalyzes the hydrolysis of N(2)-succinylarginine into N(2)-succinylornithine, ammonia and CO(2). In Salmonella heidelberg (strain SL476), this protein is N-succinylarginine dihydrolase.